Consider the following 508-residue polypeptide: Mu-like prophage FluMu protein gp28 (508 aa).

It to phage Mu protein gp28.

The chain is Mu-like prophage FluMu protein gp28 from Haemophilus influenzae (strain ATCC 51907 / DSM 11121 / KW20 / Rd).